A 72-amino-acid chain; its full sequence is UPF0270 protein YheU (72 aa).

The protein belongs to the UPF0270 family.

This Escherichia coli (strain ATCC 8739 / DSM 1576 / NBRC 3972 / NCIMB 8545 / WDCM 00012 / Crooks) protein is UPF0270 protein YheU.